We begin with the raw amino-acid sequence, 663 residues long: Zeaxanthin epoxidase, chloroplastic (663 aa).

The N-terminal 50 residues, 1-50 (MYSTVFYTSVHPSTSAFSRKQLPLLISKDFPTELYHSLPCSRSLENGQIK), are a transit peptide targeting the chloroplast. FAD-binding positions include 81 to 109 (KVLVAGGGIGGLVFALAAKKRGFDVLVFE) and 359 to 372 (TFSWGKGRVTLLGD). An FHA domain is found at 547-611 (LVLSRDENMP…HGTWITDNEG (65 aa)).

FAD serves as cofactor. As to expression, higher expression in leaves than in roots.

Its subcellular location is the plastid. It localises to the chloroplast membrane. The protein resides in the chloroplast thylakoid membrane. It catalyses the reaction all-trans-zeaxanthin + 4 reduced [2Fe-2S]-[ferredoxin] + 2 O2 + 4 H(+) = all-trans-violaxanthin + 4 oxidized [2Fe-2S]-[ferredoxin] + 2 H2O. The protein operates within plant hormone biosynthesis; abscisate biosynthesis. In terms of biological role, converts zeaxanthin into antheraxanthin and subsequently violaxanthin. Involved in the epoxidation of zeaxanthin. Plays an important role in resistance to stresses, seed development and dormancy. This chain is Zeaxanthin epoxidase, chloroplastic (ABA2), found in Nicotiana plumbaginifolia (Leadwort-leaved tobacco).